Consider the following 1024-residue polypeptide: Carbamoyl phosphate synthase large chain (1024 aa).

A carboxyphosphate synthetic domain region spans residues 1-402 (MPKRTDLQTI…SLQKALRSTE (402 aa)). The ATP site is built by arginine 129, arginine 169, glycine 175, glycine 176, glutamate 208, isoleucine 210, glutamate 215, glycine 241, valine 242, histidine 243, glutamine 285, and glutamate 299. One can recognise an ATP-grasp 1 domain in the interval 133 to 328 (QAAMKKIGVE…IAKIAALLAV (196 aa)). The Mg(2+) site is built by glutamine 285, glutamate 299, and asparagine 301. Mn(2+) is bound by residues glutamine 285, glutamate 299, and asparagine 301. The interval 403-546 (GDIRGVYAEM…YSTYEWEDEV (144 aa)) is oligomerization domain. The segment at 547 to 929 (APTDKPKVVI…AFYRAQLGAK (383 aa)) is carbamoyl phosphate synthetic domain. Residues 671-863 (NALCERLGLP…LAKSAARIAA (193 aa)) enclose the ATP-grasp 2 domain. ATP contacts are provided by arginine 707, glutamine 747, leucine 749, glutamate 754, glycine 779, valine 780, histidine 781, serine 782, glutamine 822, and glutamate 834. Mg(2+) contacts are provided by glutamine 822, glutamate 834, and asparagine 836. Residues glutamine 822, glutamate 834, and asparagine 836 each contribute to the Mn(2+) site. The 95-residue stretch at 930–1024 (NYLPLEGTAL…GVRSLQEWVK (95 aa)) folds into the MGS-like domain. The interval 930–1024 (NYLPLEGTAL…GVRSLQEWVK (95 aa)) is allosteric domain.

This sequence belongs to the CarB family. Composed of two chains; the small (or glutamine) chain promotes the hydrolysis of glutamine to ammonia, which is used by the large (or ammonia) chain to synthesize carbamoyl phosphate. Tetramer of heterodimers (alpha,beta)4. It depends on Mg(2+) as a cofactor. Mn(2+) is required as a cofactor.

The enzyme catalyses hydrogencarbonate + L-glutamine + 2 ATP + H2O = carbamoyl phosphate + L-glutamate + 2 ADP + phosphate + 2 H(+). The catalysed reaction is hydrogencarbonate + NH4(+) + 2 ATP = carbamoyl phosphate + 2 ADP + phosphate + 2 H(+). Its pathway is amino-acid biosynthesis; L-arginine biosynthesis; carbamoyl phosphate from bicarbonate: step 1/1. It functions in the pathway pyrimidine metabolism; UMP biosynthesis via de novo pathway; (S)-dihydroorotate from bicarbonate: step 1/3. Its function is as follows. Large subunit of the glutamine-dependent carbamoyl phosphate synthetase (CPSase). CPSase catalyzes the formation of carbamoyl phosphate from the ammonia moiety of glutamine, carbonate, and phosphate donated by ATP, constituting the first step of 2 biosynthetic pathways, one leading to arginine and/or urea and the other to pyrimidine nucleotides. The large subunit (synthetase) binds the substrates ammonia (free or transferred from glutamine from the small subunit), hydrogencarbonate and ATP and carries out an ATP-coupled ligase reaction, activating hydrogencarbonate by forming carboxy phosphate which reacts with ammonia to form carbamoyl phosphate. This Deinococcus radiodurans (strain ATCC 13939 / DSM 20539 / JCM 16871 / CCUG 27074 / LMG 4051 / NBRC 15346 / NCIMB 9279 / VKM B-1422 / R1) protein is Carbamoyl phosphate synthase large chain.